The following is a 468-amino-acid chain: MVDTESPICPLSPLEADDLESPLSEEFLQEMGNIQEISQSIGEESSGSFGFADYQYLGSCPGSEGSVITDTLSPASSPSSVSCPVIPASTDESPGSALNIECRICGDKASGYHYGVHACEGCKGFFRRTIRLKLVYDKCDRSCKIQKKNRNKCQYCRFHKCLSVGMSHNAIRFGRMPRSEKAKLKAEILTCEHDLKDSETADLKSLGKRIHEAYLKNFNMNKVKARVILAGKTSNNPPFVIHDMETLCMAEKTLVAKMVANGVEDKEAEVRFFHCCQCMSVETVTELTEFAKAIPGFANLDLNDQVTLLKYGVYEAIFTMLSSLMNKDGMLIAYGNGFITREFLKNLRKPFCDIMEPKFDFAMKFNALELDDSDISLFVAAIICCGDRPGLLNIGYIEKLQEGIVHVLKLHLQSNHPDDTFLFPKLLQKMVDLRQLVTEHAQLVQVIKKTESDAALHPLLQEIYRDMY.

The segment at residues 99–173 (NIECRICGDK…VGMSHNAIRF (75 aa)) is a DNA-binding region (nuclear receptor). 2 NR C4-type zinc fingers span residues 102 to 122 (CRIC…CEGC) and 139 to 161 (CDRS…FHKC). In terms of domain architecture, NR LBD spans 239–466 (FVIHDMETLC…HPLLQEIYRD (228 aa)). Residues 304–433 (DQVTLLKYGV…PKLLQKMVDL (130 aa)) form a required for heterodimerization with RXRA region.

This sequence belongs to the nuclear hormone receptor family. NR1 subfamily. Heterodimer; with RXRA. This heterodimerization is required for DNA binding and transactivation activity. Interacts with NCOA3 coactivator. Interacts with CITED2; the interaction stimulates its transcriptional activity. Also interacts with PPARBP in vitro. Interacts with AKAP13, LPIN1, PRDM16 and coactivator NCOA6. Interacts with ASXL1 and ASXL2. Interacts with PER2. Interacts with SIRT1; the interaction seems to be modulated by NAD(+) levels. Interacts with CRY1 and CRY2. In hepatocytes, interacts with PAQR3 and HUWE1; the interactions promote PPARA poylubiquitination and HUWE1-mediated degradation. Ubiquitinated by E3 ubiquitin-protein ligase HUWE1; leading to proteasomal degradation. Post-translationally, phosphorylated. As to expression, highly expressed in liver, kidney and heart. Very weakly expressed in brain and testis.

It localises to the nucleus. Its function is as follows. Ligand-activated transcription factor. Key regulator of lipid metabolism. Activated by the endogenous ligand 1-palmitoyl-2-oleoyl-sn-glycerol-3-phosphocholine (16:0/18:1-GPC). Activated by oleylethanolamide, a naturally occurring lipid that regulates satiety. Receptor for peroxisome proliferators such as hypolipidemic drugs and fatty acids. Regulates the peroxisomal beta-oxidation pathway of fatty acids. Functions as a transcription activator for the ACOX1 and P450 genes. Transactivation activity requires heterodimerization with RXRA and is antagonized by NR2C2. May be required for the propagation of clock information to metabolic pathways regulated by PER2. The protein is Peroxisome proliferator-activated receptor alpha (Ppara) of Mus musculus (Mouse).